Here is a 386-residue protein sequence, read N- to C-terminus: Succinate--CoA ligase [ADP-forming] subunit beta (386 aa).

Positions 9-244 constitute an ATP-grasp domain; sequence KEILRNFGVP…LDEEDPAEVE (236 aa). Residues Lys-46, 53–55, Glu-99, Ala-102, and Glu-107 contribute to the ATP site; that span reads GRG. Positions 199 and 213 each coordinate Mg(2+). Substrate is bound by residues Asn-264 and 321 to 323; that span reads GIM.

Belongs to the succinate/malate CoA ligase beta subunit family. In terms of assembly, heterotetramer of two alpha and two beta subunits. The cofactor is Mg(2+).

It carries out the reaction succinate + ATP + CoA = succinyl-CoA + ADP + phosphate. The catalysed reaction is GTP + succinate + CoA = succinyl-CoA + GDP + phosphate. It functions in the pathway carbohydrate metabolism; tricarboxylic acid cycle; succinate from succinyl-CoA (ligase route): step 1/1. In terms of biological role, succinyl-CoA synthetase functions in the citric acid cycle (TCA), coupling the hydrolysis of succinyl-CoA to the synthesis of either ATP or GTP and thus represents the only step of substrate-level phosphorylation in the TCA. The beta subunit provides nucleotide specificity of the enzyme and binds the substrate succinate, while the binding sites for coenzyme A and phosphate are found in the alpha subunit. In Polaromonas naphthalenivorans (strain CJ2), this protein is Succinate--CoA ligase [ADP-forming] subunit beta.